We begin with the raw amino-acid sequence, 783 residues long: Polyribonucleotide nucleotidyltransferase 1, mitochondrial (783 aa).

The transit peptide at 1–45 (MAACRYCCSCLRLRPLSDGPFLLPRRDRALTQLQVRALWSSAGSR) directs the protein to the mitochondrion. Lys-250, Lys-264, Lys-285, and Lys-289 each carry N6-acetyllysine. Lys-552 carries the post-translational modification N6-succinyllysine. The region spanning 605–664 (PVVETVQVPLSKRAKFVGPGGYNLKKLQAETGVTISQVDEETFSVFAPTPSAMHEARDFI) is the KH domain. The S1 motif domain occupies 679-750 (GAVYTATITE…ADGRMRLSRK (72 aa)). A phosphoserine mark is found at Ser-754 and Ser-782.

This sequence belongs to the polyribonucleotide nucleotidyltransferase family. In terms of assembly, homotrimer; in free form. Homooligomer. Component of the mitochondrial degradosome (mtEXO) complex which is a heteropentamer containing 2 copies of SUPV3L1 and 3 copies of PNPT1. As part of the mitochondrial degradosome complex, interacts with GRSF1 in an RNA-dependent manner; the interaction enhances the activity of the complex. Interacts with TCL1A; the interaction has no effect on PNPT1 exonuclease activity.

The protein localises to the cytoplasm. It is found in the mitochondrion matrix. The protein resides in the mitochondrion intermembrane space. It catalyses the reaction RNA(n+1) + phosphate = RNA(n) + a ribonucleoside 5'-diphosphate. RNA-binding protein implicated in numerous RNA metabolic processes. Catalyzes the phosphorolysis of single-stranded polyribonucleotides processively in the 3'-to-5' direction. Mitochondrial intermembrane factor with RNA-processing exoribonulease activity. Component of the mitochondrial degradosome (mtEXO) complex, that degrades 3' overhang double-stranded RNA with a 3'-to-5' directionality in an ATP-dependent manner. Involved in the degradation of non-coding mitochondrial transcripts (MT-ncRNA) and tRNA-like molecules. Required for correct processing and polyadenylation of mitochondrial mRNAs. Plays a role as a cytoplasmic RNA import factor that mediates the translocation of small RNA components, like the 5S RNA, the RNA subunit of ribonuclease P and the mitochondrial RNA-processing (MRP) RNA, into the mitochondrial matrix. Plays a role in mitochondrial morphogenesis and respiration; regulates the expression of the electron transport chain (ETC) components at the mRNA and protein levels. In the cytoplasm, shows a 3'-to-5' exoribonuclease mediating mRNA degradation activity; degrades c-myc mRNA upon treatment with IFNB1/IFN-beta, resulting in a growth arrest in melanoma cells. Regulates the stability of specific mature miRNAs in melanoma cells; specifically and selectively degrades miR-221, preferentially. Also plays a role in RNA cell surveillance by cleaning up oxidized RNAs. Binds to the RNA subunit of ribonuclease P, MRP RNA and miR-221 microRNA. The polypeptide is Polyribonucleotide nucleotidyltransferase 1, mitochondrial (Homo sapiens (Human)).